The primary structure comprises 466 residues: L-seryl-tRNA(Sec) selenium transferase (466 aa).

N6-(pyridoxal phosphate)lysine is present on lysine 294.

It belongs to the SelA family. Requires pyridoxal 5'-phosphate as cofactor.

It localises to the cytoplasm. It catalyses the reaction L-seryl-tRNA(Sec) + selenophosphate + H(+) = L-selenocysteinyl-tRNA(Sec) + phosphate. Its pathway is aminoacyl-tRNA biosynthesis; selenocysteinyl-tRNA(Sec) biosynthesis; selenocysteinyl-tRNA(Sec) from L-seryl-tRNA(Sec) (bacterial route): step 1/1. In terms of biological role, converts seryl-tRNA(Sec) to selenocysteinyl-tRNA(Sec) required for selenoprotein biosynthesis. The protein is L-seryl-tRNA(Sec) selenium transferase of Carboxydothermus hydrogenoformans (strain ATCC BAA-161 / DSM 6008 / Z-2901).